A 194-amino-acid polypeptide reads, in one-letter code: Oligoribonuclease (194 aa).

One can recognise an Exonuclease domain in the interval 11–174; the sequence is LIWIDLEMTG…SDVRDSIDEL (164 aa). The active site involves Tyr-132.

It belongs to the oligoribonuclease family.

The protein localises to the cytoplasm. Functionally, 3'-to-5' exoribonuclease specific for small oligoribonucleotides. This is Oligoribonuclease from Xanthomonas euvesicatoria pv. vesicatoria (strain 85-10) (Xanthomonas campestris pv. vesicatoria).